Here is a 193-residue protein sequence, read N- to C-terminus: uncharacterized protein (193 aa).

The next 4 helical transmembrane spans lie at 8 to 28, 46 to 66, 82 to 102, and 141 to 161; these read GVLV…VVAI, FFIA…VASA, GLSI…ALVV, and IALT…LLAA.

To M.leprae ML1222.

The protein resides in the cell membrane. This is an uncharacterized protein from Mycobacterium tuberculosis (strain CDC 1551 / Oshkosh).